We begin with the raw amino-acid sequence, 567 residues long: Septation ring formation regulator EzrA (567 aa).

At 1–2 (ME) the chain is on the extracellular side. The chain crosses the membrane as a helical span at residues 3-21 (FIIGLIVILLALFSVGYFL). Topologically, residues 22–567 (RKNIYKEIDR…AQQEKEYQHQ (546 aa)) are cytoplasmic. 3 coiled-coil regions span residues 108-185 (IEDL…YEEE), 243-375 (KGYK…RDHV), and 402-529 (KGHL…ERRF).

It belongs to the EzrA family.

Its subcellular location is the cell membrane. Functionally, negative regulator of FtsZ ring formation; modulates the frequency and position of FtsZ ring formation. Inhibits FtsZ ring formation at polar sites. Interacts either with FtsZ or with one of its binding partners to promote depolymerization. The polypeptide is Septation ring formation regulator EzrA (Bacillus pumilus (strain SAFR-032)).